Here is an 85-residue protein sequence, read N- to C-terminus: Alpha-insect toxin BjaIT (85 aa).

Residues 1-19 (MNYLVVICFALLLMTGVES) form the signal peptide. The 63-residue stretch at 21–83 (RDAYIADNLN…VPIRIPGACR (63 aa)) folds into the LCN-type CS-alpha/beta domain. Intrachain disulfides connect Cys-31–Cys-82, Cys-35–Cys-55, Cys-41–Cys-65, and Cys-45–Cys-67. Arg-83 bears the Arginine amide mark.

It belongs to the long (4 C-C) scorpion toxin superfamily. Sodium channel inhibitor family. Alpha subfamily. In terms of tissue distribution, expressed by the venom gland.

The protein localises to the secreted. In terms of biological role, alpha toxins bind voltage-independently at site-3 of sodium channels (Nav) and inhibit the inactivation of the activated channels, thereby blocking neuronal transmission. This toxin is active against insects (para/tipE). This Hottentotta judaicus (Black scorpion) protein is Alpha-insect toxin BjaIT.